Consider the following 29-residue polypeptide: Cytochrome b6-f complex subunit 8 (29 aa).

Residues 3-23 (IVSLAWAGLMVVFTFSLSLVV) form a helical membrane-spanning segment.

Belongs to the PetN family. In terms of assembly, the 4 large subunits of the cytochrome b6-f complex are cytochrome b6, subunit IV (17 kDa polypeptide, PetD), cytochrome f and the Rieske protein, while the 4 small subunits are PetG, PetL, PetM and PetN. The complex functions as a dimer.

Its subcellular location is the plastid. It is found in the chloroplast thylakoid membrane. Component of the cytochrome b6-f complex, which mediates electron transfer between photosystem II (PSII) and photosystem I (PSI), cyclic electron flow around PSI, and state transitions. This is Cytochrome b6-f complex subunit 8 from Arabis hirsuta (Hairy rock-cress).